The chain runs to 171 residues: Large ribosomal subunit protein uL10 (171 aa).

This sequence belongs to the universal ribosomal protein uL10 family. Part of the ribosomal stalk of the 50S ribosomal subunit. The N-terminus interacts with L11 and the large rRNA to form the base of the stalk. The C-terminus forms an elongated spine to which L12 dimers bind in a sequential fashion forming a multimeric L10(L12)X complex.

In terms of biological role, forms part of the ribosomal stalk, playing a central role in the interaction of the ribosome with GTP-bound translation factors. This Rhizorhabdus wittichii (strain DSM 6014 / CCUG 31198 / JCM 15750 / NBRC 105917 / EY 4224 / RW1) (Sphingomonas wittichii) protein is Large ribosomal subunit protein uL10.